A 151-amino-acid chain; its full sequence is Large ribosomal subunit protein uL22 (151 aa).

It belongs to the universal ribosomal protein uL22 family. Part of the 50S ribosomal subunit.

In terms of biological role, this protein binds specifically to 23S rRNA. It makes multiple contacts with different domains of the 23S rRNA in the assembled 50S subunit and ribosome. Functionally, the globular domain of the protein is located near the polypeptide exit tunnel on the outside of the subunit, while an extended beta-hairpin is found that lines the wall of the exit tunnel in the center of the 70S ribosome. The protein is Large ribosomal subunit protein uL22 of Thermofilum pendens (strain DSM 2475 / Hrk 5).